The primary structure comprises 238 residues: Uridylate kinase (238 aa).

Residue 12–15 (KLSG) coordinates ATP. An involved in allosteric activation by GTP region spans residues 20–25 (GQQGFG). Glycine 54 lines the UMP pocket. The ATP site is built by glycine 55 and arginine 59. UMP-binding positions include aspartate 74 and 135 to 142 (TGNPFFTT). The ATP site is built by threonine 162, asparagine 163, tyrosine 168, and aspartate 171.

It belongs to the UMP kinase family. Homohexamer.

It is found in the cytoplasm. It carries out the reaction UMP + ATP = UDP + ADP. It functions in the pathway pyrimidine metabolism; CTP biosynthesis via de novo pathway; UDP from UMP (UMPK route): step 1/1. Allosterically activated by GTP. Inhibited by UTP. Catalyzes the reversible phosphorylation of UMP to UDP. The protein is Uridylate kinase of Bradyrhizobium diazoefficiens (strain JCM 10833 / BCRC 13528 / IAM 13628 / NBRC 14792 / USDA 110).